Consider the following 344-residue polypeptide: Aspartate-semialdehyde dehydrogenase (344 aa).

Residues 10 to 13 (TGQV) and 38 to 39 (RS) contribute to the NADP(+) site. Phosphate is bound at residue R101. The Acyl-thioester intermediate role is filled by C131. Q158 provides a ligand contact to substrate. 161-162 (SG) lines the NADP(+) pocket. Residue K228 coordinates phosphate. Position 250 (R250) interacts with substrate. The active-site Proton acceptor is the H257. Position 326 (N326) interacts with NADP(+).

It belongs to the aspartate-semialdehyde dehydrogenase family. Homodimer.

It carries out the reaction L-aspartate 4-semialdehyde + phosphate + NADP(+) = 4-phospho-L-aspartate + NADPH + H(+). Its pathway is amino-acid biosynthesis; L-lysine biosynthesis via DAP pathway; (S)-tetrahydrodipicolinate from L-aspartate: step 2/4. It participates in amino-acid biosynthesis; L-methionine biosynthesis via de novo pathway; L-homoserine from L-aspartate: step 2/3. It functions in the pathway amino-acid biosynthesis; L-threonine biosynthesis; L-threonine from L-aspartate: step 2/5. Catalyzes the NADPH-dependent formation of L-aspartate-semialdehyde (L-ASA) by the reductive dephosphorylation of L-aspartyl-4-phosphate. This Corynebacterium glutamicum (strain ATCC 13032 / DSM 20300 / JCM 1318 / BCRC 11384 / CCUG 27702 / LMG 3730 / NBRC 12168 / NCIMB 10025 / NRRL B-2784 / 534) protein is Aspartate-semialdehyde dehydrogenase.